A 290-amino-acid chain; its full sequence is Protease HtpX homolog (290 aa).

2 helical membrane passes run Ile-4–Leu-24 and Pro-39–Ile-59. Residue His-144 coordinates Zn(2+). The active site involves Glu-145. His-148 provides a ligand contact to Zn(2+). The next 2 membrane-spanning stretches (helical) occupy residues Leu-159–Val-179 and Ile-197–Phe-217. Glu-222 contacts Zn(2+).

This sequence belongs to the peptidase M48B family. Zn(2+) serves as cofactor.

The protein resides in the cell inner membrane. The chain is Protease HtpX homolog from Janthinobacterium sp. (strain Marseille) (Minibacterium massiliensis).